Consider the following 435-residue polypeptide: Xylose isomerase (435 aa).

Catalysis depends on residues His-99 and Asp-102. The Mg(2+) site is built by Glu-230, Glu-266, His-269, Asp-294, Asp-305, Asp-307, and Asp-337.

Belongs to the xylose isomerase family. As to quaternary structure, homotetramer. Requires Mg(2+) as cofactor.

It localises to the cytoplasm. The enzyme catalyses alpha-D-xylose = alpha-D-xylulofuranose. This Tetragenococcus halophilus (Pediococcus halophilus) protein is Xylose isomerase (xylA).